The sequence spans 38 residues: Large ribosomal subunit protein bL36c (38 aa).

It belongs to the bacterial ribosomal protein bL36 family.

The protein localises to the plastid. It localises to the chloroplast. This Mesostigma viride (Green alga) protein is Large ribosomal subunit protein bL36c (rpl36).